The primary structure comprises 517 residues: Crotonobetaine/carnitine--CoA ligase (517 aa).

It belongs to the ATP-dependent AMP-binding enzyme family.

The enzyme catalyses 4-(trimethylamino)butanoate + ATP + CoA = 4-(trimethylamino)butanoyl-CoA + AMP + diphosphate. It catalyses the reaction crotonobetaine + ATP + CoA = crotonobetainyl-CoA + AMP + diphosphate. It carries out the reaction (R)-carnitine + ATP + CoA = (R)-carnitinyl-CoA + AMP + diphosphate. The protein operates within amine and polyamine metabolism; carnitine metabolism. In terms of biological role, catalyzes the transfer of CoA to carnitine, generating the initial carnitinyl-CoA needed for the CaiB reaction cycle. Also has activity toward crotonobetaine and gamma-butyrobetaine. The chain is Crotonobetaine/carnitine--CoA ligase from Escherichia coli O9:H4 (strain HS).